The sequence spans 287 residues: Formamidopyrimidine-DNA glycosylase (287 aa).

Pro2 functions as the Schiff-base intermediate with DNA in the catalytic mechanism. The active-site Proton donor is Glu3. Lys61 functions as the Proton donor; for beta-elimination activity in the catalytic mechanism. Residues His95, Arg115, and Arg157 each coordinate DNA. An FPG-type zinc finger spans residues 243-277 (NVYGRADQPCRRCGTPVRREAFMNRSSYSCPRCQP). The active-site Proton donor; for delta-elimination activity is the Arg267.

It belongs to the FPG family. Monomer. The cofactor is Zn(2+).

It catalyses the reaction Hydrolysis of DNA containing ring-opened 7-methylguanine residues, releasing 2,6-diamino-4-hydroxy-5-(N-methyl)formamidopyrimidine.. It carries out the reaction 2'-deoxyribonucleotide-(2'-deoxyribose 5'-phosphate)-2'-deoxyribonucleotide-DNA = a 3'-end 2'-deoxyribonucleotide-(2,3-dehydro-2,3-deoxyribose 5'-phosphate)-DNA + a 5'-end 5'-phospho-2'-deoxyribonucleoside-DNA + H(+). Functionally, involved in base excision repair of DNA damaged by oxidation or by mutagenic agents. Acts as a DNA glycosylase that recognizes and removes damaged bases. Has a preference for oxidized purines, such as 7,8-dihydro-8-oxoguanine (8-oxoG). Has AP (apurinic/apyrimidinic) lyase activity and introduces nicks in the DNA strand. Cleaves the DNA backbone by beta-delta elimination to generate a single-strand break at the site of the removed base with both 3'- and 5'-phosphates. The protein is Formamidopyrimidine-DNA glycosylase of Salinispora arenicola (strain CNS-205).